Here is a 153-residue protein sequence, read N- to C-terminus: Endoribonuclease YbeY (153 aa).

3 residues coordinate Zn(2+): His-118, His-122, and His-128.

This sequence belongs to the endoribonuclease YbeY family. Zn(2+) serves as cofactor.

The protein localises to the cytoplasm. In terms of biological role, single strand-specific metallo-endoribonuclease involved in late-stage 70S ribosome quality control and in maturation of the 3' terminus of the 16S rRNA. The chain is Endoribonuclease YbeY from Chloroflexus aggregans (strain MD-66 / DSM 9485).